Consider the following 182-residue polypeptide: UPF0397 protein BA_2640/GBAA_2640/BAS2460 (182 aa).

The next 5 membrane-spanning stretches (helical) occupy residues 9 to 29 (VVAI…GFSI), 40 to 60 (AILT…IGLI), 71 to 91 (WSIW…MGFI), 114 to 134 (ITGL…DIIV), and 142 to 162 (IVIQ…VLGL).

Belongs to the UPF0397 family.

The protein localises to the cell membrane. This Bacillus anthracis protein is UPF0397 protein BA_2640/GBAA_2640/BAS2460.